The following is a 416-amino-acid chain: CinA-like protein (416 aa).

It belongs to the CinA family.

This chain is CinA-like protein, found in Rippkaea orientalis (strain PCC 8801 / RF-1) (Cyanothece sp. (strain PCC 8801)).